The primary structure comprises 647 residues: MSKASLSPNVEDLKKKQIRQYKEIIRISKAQSIRIKELQLENERLLSENIDLRTTAINLEEQLETVQNENEENKTKLAALLNRFHEETDNFLSKLSLCQQEIQDTFKPVEANLAYDVDTDSEDLDEESVVKDTEEIIEQAQHDVSLRNLSGIEDENIIDDGETAINEQKKREANVFSDTQSAPQLKSGKALPADFENPYNLSNSKPVNNNNEDRVEAVTSENKSIDSAPQEKNHEYEIVSPKSLSNKINNQAAAQRRTEEDNANGVAQEENEGSQEAHFHSRIQSDTVIQSTPTKRKWDVDIQNKQINLASAATNVTGYVSETDSRPNRANSLDSAVLLVQSSNKSNRNGHHISDPNLNSSISLKFAPEDTAHNSLTSQENVGPQVTTTSLSNMTVAESPRTDTPREINGLVDSSVTNGNEKFSVEIMNDSNKIGLNPKSFTDEEREILTLFRNPPMRLSSEPPSSNGFSIAHPNNSPLRPPSLQGILNAEDRPYEIEPSRSSFATNDTGSYNNLELLSSVTNLKSPNENDRVTKTQSRRETKVKRRRKARIQETSEESTVVNEPNEKPDGRSRRERKKVNYALPGLRTKLRRNFDLPSDHVKAKKTRRAPKNSENDSATKTETANITSEAPTTSEVTLENSETLNL.

S7 carries the post-translational modification Phosphoserine. Coiled coils occupy residues 28-87 (SKAQ…FHEE) and 125-145 (DEES…HDVS). The interval 171–295 (REANVFSDTQ…DTVIQSTPTK (125 aa)) is disordered. Positions 200–210 (NLSNSKPVNNN) are enriched in low complexity. The residue at position 240 (S240) is a Phosphoserine. Composition is skewed to polar residues over residues 242 to 253 (KSLSNKINNQAA) and 282 to 293 (RIQSDTVIQSTP). Phosphothreonine is present on T292. Phosphoserine is present on residues S332 and S335. Composition is skewed to polar residues over residues 375-396 (SLTS…NMTV) and 462-478 (EPPS…NNSP). Disordered regions lie at residues 375–416 (SLTS…DSSV), 453–486 (RNPP…SLQG), 522–579 (TNLK…ERKK), and 593–647 (RNFD…TLNL). Basic and acidic residues-rich tracts occupy residues 528–541 (NEND…SRRE) and 593–602 (RNFDLPSDHV). Residues 621–647 (KTETANITSEAPTTSEVTLENSETLNL) show a composition bias toward polar residues.

It belongs to the shugoshin family.

The protein resides in the chromosome. Its subcellular location is the centromere. Involved in chromosome cohesion during mitosis and meiosis by preventing premature dissociation of cohesin complex from centromeres after prophase, when most of cohesin complex dissociates from chromosomes arms. Required for faithful mitotic chromosome segregation and proper kinetochore orientation during meiosis I. In contrast to sgo1, it is dispensable for centromeric protection of rec8 during meiosis I as well as protection of rad21 during mitosis. Required to sense the lack of tension at centromeres during mitosis. The sequence is that of Shugoshin-2 (sgo2) from Schizosaccharomyces pombe (strain 972 / ATCC 24843) (Fission yeast).